The following is a 176-amino-acid chain: 4-hydroxylaminobenzoate lyase (176 aa).

This sequence belongs to the PnbB family.

The catalysed reaction is 4-hydroxylaminobenzoate + H2O + H(+) = 3,4-dihydroxybenzoate + NH4(+). Functionally, lyase involved in the degradation of nitroaromatic compounds. Catalyzes the conversion of 4-hydroxylaminobenzoate to 3,4-dihydroxybenzoate (protocatechuate). Required for the catabolism of 4-nitrotoluene. In Pseudomonas putida (Arthrobacter siderocapsulatus), this protein is 4-hydroxylaminobenzoate lyase.